A 476-amino-acid chain; its full sequence is MASSFSGVLQLTDLDDFIGPSQECIKPIKVEKKAGRAAAKIQIEDDGSYVQINPEGAARKLEKAKITLNDCLACSGCVTSAETILITQQSHEELYKILKQNKTENPLEHKVVVVSVSPQSWASLAARFNLIMQDTAQKLTAFFKQLGVHHVFDTNFSRNFSLLESQREFIQRFKRQKEDKKSLPMLASACPGWICYAEKTHGSFILPYISSTKSPQQVMGSLVKSHFAKEKNLKPNQIYHVTVMPCYDKKLEASRPDFYNQEYETREVDCVITTGEVLRMLEQEGLSLSDVDPSPLDTLFGSAVQEEPVGHQGGGSGGYLEHVFRHAAQELFGVHVDTVVYKPLKNKDFQEVTLEQDGNVVLHFALAYGFRNIQNLVQKLKRGRCPYHYVEVMACPSGCLNGGGQIKAEGEGSKDLLQRVEDLYNTVRTERPEEREEVAQLYGDWLEDKDSAKARQALHTQYHAVEKINSGLTIKW.

[4Fe-4S] cluster-binding residues include cysteine 24, cysteine 71, cysteine 74, cysteine 77, cysteine 190, cysteine 246, cysteine 395, and cysteine 399.

The protein belongs to the NARF family. As to quaternary structure, component of the CIA complex.

Functionally, component of the cytosolic iron-sulfur protein assembly (CIA) complex, a multiprotein complex that mediates the incorporation of iron-sulfur cluster into extramitochondrial Fe/S proteins. The protein is Cytosolic Fe-S cluster assembly factor narfl (narfl) of Xenopus tropicalis (Western clawed frog).